The following is a 624-amino-acid chain: DNA mismatch repair protein MutL (624 aa).

Residues 336–357 (GEGFHETSDSFSSRSSQHSDAR) form a disordered region. Residues 344-353 (DSFSSRSSQH) show a composition bias toward low complexity.

Belongs to the DNA mismatch repair MutL/HexB family.

In terms of biological role, this protein is involved in the repair of mismatches in DNA. It is required for dam-dependent methyl-directed DNA mismatch repair. May act as a 'molecular matchmaker', a protein that promotes the formation of a stable complex between two or more DNA-binding proteins in an ATP-dependent manner without itself being part of a final effector complex. This is DNA mismatch repair protein MutL from Chlorobium phaeobacteroides (strain BS1).